The primary structure comprises 268 residues: Phosphate import ATP-binding protein PstB 3 (268 aa).

One can recognise an ABC transporter domain in the interval 15–254 (LRTENLNVYY…DATESIFNNP (240 aa)). 47–54 (GPSGCGKS) provides a ligand contact to ATP.

Belongs to the ABC transporter superfamily. Phosphate importer (TC 3.A.1.7) family. The complex is composed of two ATP-binding proteins (PstB), two transmembrane proteins (PstC and PstA) and a solute-binding protein (PstS).

It localises to the cell inner membrane. The catalysed reaction is phosphate(out) + ATP + H2O = ADP + 2 phosphate(in) + H(+). Functionally, part of the ABC transporter complex PstSACB involved in phosphate import. Responsible for energy coupling to the transport system. The protein is Phosphate import ATP-binding protein PstB 3 of Nostoc sp. (strain PCC 7120 / SAG 25.82 / UTEX 2576).